The sequence spans 266 residues: rRNA adenine N-6-methyltransferase (266 aa).

Residues histidine 14, threonine 16, glycine 41, glutamate 62, aspartate 87, and asparagine 103 each coordinate S-adenosyl-L-methionine.

Belongs to the class I-like SAM-binding methyltransferase superfamily. rRNA adenine N(6)-methyltransferase family.

Functionally, involved in erythromycin resistance. The polypeptide is rRNA adenine N-6-methyltransferase (ermF) (Bacteroides fragilis).